A 167-amino-acid chain; its full sequence is ATP synthase subunit b (167 aa).

Residues 7–25 (SFWLTISFVIFVYLIYRPA) traverse the membrane as a helical segment.

This sequence belongs to the ATPase B chain family. As to quaternary structure, F-type ATPases have 2 components, F(1) - the catalytic core - and F(0) - the membrane proton channel. F(1) has five subunits: alpha(3), beta(3), gamma(1), delta(1), epsilon(1). F(0) has three main subunits: a(1), b(2) and c(10-14). The alpha and beta chains form an alternating ring which encloses part of the gamma chain. F(1) is attached to F(0) by a central stalk formed by the gamma and epsilon chains, while a peripheral stalk is formed by the delta and b chains.

The protein resides in the cell inner membrane. F(1)F(0) ATP synthase produces ATP from ADP in the presence of a proton or sodium gradient. F-type ATPases consist of two structural domains, F(1) containing the extramembraneous catalytic core and F(0) containing the membrane proton channel, linked together by a central stalk and a peripheral stalk. During catalysis, ATP synthesis in the catalytic domain of F(1) is coupled via a rotary mechanism of the central stalk subunits to proton translocation. Functionally, component of the F(0) channel, it forms part of the peripheral stalk, linking F(1) to F(0). This chain is ATP synthase subunit b, found in Rickettsia prowazekii (strain Madrid E).